The chain runs to 339 residues: Ketol-acid reductoisomerase (NADP(+)) (339 aa).

In terms of domain architecture, KARI N-terminal Rossmann spans 1-182; that stretch reads MRVYYDRDAD…GGGRAGIIET (182 aa). NADP(+)-binding positions include 24–27, R48, S51, and 83–86; these read YGSQ and DEGQ. The active site involves H108. G134 lines the NADP(+) pocket. The KARI C-terminal knotted domain maps to 183–328; it reads TFKEEVETDL…EKLRAMMPWI (146 aa). D191, E195, E227, and E231 together coordinate Mg(2+). Position 252 (S252) interacts with substrate.

The protein belongs to the ketol-acid reductoisomerase family. Mg(2+) is required as a cofactor.

It catalyses the reaction (2R)-2,3-dihydroxy-3-methylbutanoate + NADP(+) = (2S)-2-acetolactate + NADPH + H(+). The catalysed reaction is (2R,3R)-2,3-dihydroxy-3-methylpentanoate + NADP(+) = (S)-2-ethyl-2-hydroxy-3-oxobutanoate + NADPH + H(+). It participates in amino-acid biosynthesis; L-isoleucine biosynthesis; L-isoleucine from 2-oxobutanoate: step 2/4. It functions in the pathway amino-acid biosynthesis; L-valine biosynthesis; L-valine from pyruvate: step 2/4. In terms of biological role, involved in the biosynthesis of branched-chain amino acids (BCAA). Catalyzes an alkyl-migration followed by a ketol-acid reduction of (S)-2-acetolactate (S2AL) to yield (R)-2,3-dihydroxy-isovalerate. In the isomerase reaction, S2AL is rearranged via a Mg-dependent methyl migration to produce 3-hydroxy-3-methyl-2-ketobutyrate (HMKB). In the reductase reaction, this 2-ketoacid undergoes a metal-dependent reduction by NADPH to yield (R)-2,3-dihydroxy-isovalerate. This is Ketol-acid reductoisomerase (NADP(+)) from Gluconobacter oxydans (strain 621H) (Gluconobacter suboxydans).